A 73-amino-acid chain; its full sequence is Large ribosomal subunit protein bL31 (73 aa).

Residues Cys16, Cys18, Cys36, and Cys39 each contribute to the Zn(2+) site.

This sequence belongs to the bacterial ribosomal protein bL31 family. Type A subfamily. As to quaternary structure, part of the 50S ribosomal subunit. Requires Zn(2+) as cofactor.

Functionally, binds the 23S rRNA. In Desulfotalea psychrophila (strain LSv54 / DSM 12343), this protein is Large ribosomal subunit protein bL31.